The primary structure comprises 225 residues: Uracil-DNA glycosylase (225 aa).

Residue Asp-65 is the Proton acceptor of the active site.

The protein belongs to the uracil-DNA glycosylase (UDG) superfamily. UNG family.

It localises to the cytoplasm. The catalysed reaction is Hydrolyzes single-stranded DNA or mismatched double-stranded DNA and polynucleotides, releasing free uracil.. Excises uracil residues from the DNA which can arise as a result of misincorporation of dUMP residues by DNA polymerase or due to deamination of cytosine. This chain is Uracil-DNA glycosylase, found in Bacillus cereus (strain ATCC 10987 / NRS 248).